The primary structure comprises 277 residues: Urease accessory protein UreD (277 aa).

It belongs to the UreD family. As to quaternary structure, ureD, UreF and UreG form a complex that acts as a GTP-hydrolysis-dependent molecular chaperone, activating the urease apoprotein by helping to assemble the nickel containing metallocenter of UreC. The UreE protein probably delivers the nickel.

The protein localises to the cytoplasm. Functionally, required for maturation of urease via the functional incorporation of the urease nickel metallocenter. The sequence is that of Urease accessory protein UreD from Yersinia pestis (strain Pestoides F).